Here is a 409-residue protein sequence, read N- to C-terminus: LIM/homeobox protein ttx-3 (409 aa).

2 LIM zinc-binding domains span residues 108 to 169 (NQCC…RYQK) and 171 to 232 (CRKC…VRST). Disordered stretches follow at residues 245–299 (AVVA…RTSF) and 372–409 (MNPPLSSSSSGHSTDGYQLNTPPLSSEIYSPNSNYTHL). Residues 247-267 (VAPPPPPPTTTTAPPPAAPEQ) show a composition bias toward pro residues. Residues 292–351 (SKRMRTSFKHHQLRAMKTYFALNHNPDAKDLKQLAAKTNLTKRVLQVWFQNARAKYRREL) constitute a DNA-binding region (homeobox). Residues 382–409 (GHSTDGYQLNTPPLSSEIYSPNSNYTHL) are compositionally biased toward polar residues.

In terms of tissue distribution, expressed in the AIA, AIN and AIY interneurons, and in the NSM neurons. Expressed also in ADL and ASI sensory neurons in 60-70% of L2 larvae. Expression is also detected in head muscles of embryos and some early larvae but not late larvae or adults.

It localises to the nucleus. The protein localises to the perikaryon. Its subcellular location is the cell projection. The protein resides in the axon. Transcription factor. Binds to a sequence motif, 5'-TTATTGGCTTCGTTAA-3', which may be involved in AIY interneuron function, in the regulatory elements of target genes; binding is more efficient, in vitro, together with homeobox protein ceh-10. Required for specification of the AIA and AIY interneurons and the NSM neurons. Positively regulates the expression of a number of genes including ceh-10, ceh-23, kal-1, hen-1, ser-2, unc-17 and sra-11 in AIY neurons, and cat-4, flp-4, bas-1, ptps-1 and mgl-1 in NSM neurons. In concert with WNT/beta-catenin signaling, initiates expression of homeobox ceh-10 in AIY, but not in the sister cells, SMDD motor neurons. Also acts in an autoregulatory feedback loop to maintain its own expression. Plays a role in the thermotactic response, olfactory imprinting, regulation of longevity, control of dauer formation and axon outgrowth and pathfinding. Not required for normal chemosensory behavior. The sequence is that of LIM/homeobox protein ttx-3 from Caenorhabditis elegans.